Here is a 31-residue protein sequence, read N- to C-terminus: Cytochrome b6-f complex subunit 6 (31 aa).

The chain crosses the membrane as a helical span at residues 7–25 (YSGFLLAAPIPASAPFTGL).

It belongs to the PetL family. In terms of assembly, the 4 large subunits of the cytochrome b6-f complex are cytochrome b6, subunit IV (17 kDa polypeptide, PetD), cytochrome f and the Rieske protein, while the 4 small subunits are PetG, PetL, PetM and PetN. The complex functions as a dimer.

It localises to the plastid. It is found in the chloroplast thylakoid membrane. Component of the cytochrome b6-f complex, which mediates electron transfer between photosystem II (PSII) and photosystem I (PSI), cyclic electron flow around PSI, and state transitions. PetL is important for photoautotrophic growth as well as for electron transfer efficiency and stability of the cytochrome b6-f complex. The sequence is that of Cytochrome b6-f complex subunit 6 from Huperzia lucidula (Shining clubmoss).